A 691-amino-acid chain; its full sequence is Elongation factor G (691 aa).

The tr-type G domain maps to 10 to 284 (KMYRNIGIMA…AIVKYLPSPL (275 aa)). GTP is bound by residues 19-26 (AHIDAGKT), 83-87 (DTPGH), and 137-140 (NKMD).

Belongs to the TRAFAC class translation factor GTPase superfamily. Classic translation factor GTPase family. EF-G/EF-2 subfamily.

It is found in the cytoplasm. In terms of biological role, catalyzes the GTP-dependent ribosomal translocation step during translation elongation. During this step, the ribosome changes from the pre-translocational (PRE) to the post-translocational (POST) state as the newly formed A-site-bound peptidyl-tRNA and P-site-bound deacylated tRNA move to the P and E sites, respectively. Catalyzes the coordinated movement of the two tRNA molecules, the mRNA and conformational changes in the ribosome. This chain is Elongation factor G, found in Clostridium tetani (strain Massachusetts / E88).